Here is a 358-residue protein sequence, read N- to C-terminus: Zinc-type alcohol dehydrogenase-like protein YogA (358 aa).

This sequence belongs to the zinc-containing alcohol dehydrogenase family. Quinone oxidoreductase subfamily.

The protein operates within secondary metabolite biosynthesis. Functionally, zinc-type alcohol dehydrogenase-like protein; part of the gene cluster that mediates the biosynthesis of phomenoic acid, a long chain aliphatic carboxylic acid that does not appear to be essential for pathogenicity but may play a role in allowing to outcompete other fungi in the environmental niche via its antifungal properties. The polyketide synthase produces the long methylated aliphatic carboxylic acid chain of phomenoic acid. The cluster-specific cytochrome P450 monooxygenase may then hydroxylate the methyl group of carbon 31. The putative dehydrogenase YogA, which has no obvious role in phomenoic acid biosynthesis, may further modify phomenoic acid to produce a compound not identified yet. The protein is Zinc-type alcohol dehydrogenase-like protein YogA of Leptosphaeria maculans (strain JN3 / isolate v23.1.3 / race Av1-4-5-6-7-8) (Blackleg fungus).